The following is a 397-amino-acid chain: Elongation factor Tu-1 (397 aa).

Residues 10 to 206 form the tr-type G domain; sequence KPHVNIGTIG…AVDESIPEPE (197 aa). Positions 19–26 are G1; that stretch reads GHIDHGKT. Residue 19 to 26 participates in GTP binding; that stretch reads GHIDHGKT. Position 26 (T26) interacts with Mg(2+). Positions 62 to 66 are G2; it reads GITIS. The interval 83–86 is G3; that stretch reads DCPG. Residues 83-87 and 138-141 contribute to the GTP site; these read DCPGH and NKAD. Positions 138-141 are G4; the sequence is NKAD. The segment at 176–178 is G5; that stretch reads SAL.

Belongs to the TRAFAC class translation factor GTPase superfamily. Classic translation factor GTPase family. EF-Tu/EF-1A subfamily. In terms of assembly, monomer.

The protein localises to the cytoplasm. It catalyses the reaction GTP + H2O = GDP + phosphate + H(+). Functionally, GTP hydrolase that promotes the GTP-dependent binding of aminoacyl-tRNA to the A-site of ribosomes during protein biosynthesis. In Streptomyces ramocissimus, this protein is Elongation factor Tu-1.